We begin with the raw amino-acid sequence, 567 residues long: Arginine--tRNA ligase (567 aa).

Residues 121–131 (ANPNGPLHVGH) carry the 'HIGH' region motif.

It belongs to the class-I aminoacyl-tRNA synthetase family.

It is found in the cytoplasm. It catalyses the reaction tRNA(Arg) + L-arginine + ATP = L-arginyl-tRNA(Arg) + AMP + diphosphate. The chain is Arginine--tRNA ligase from Methanosarcina acetivorans (strain ATCC 35395 / DSM 2834 / JCM 12185 / C2A).